Here is a 1371-residue protein sequence, read N- to C-terminus: DNA-directed RNA polymerase subunit beta (1371 aa).

This sequence belongs to the RNA polymerase beta chain family. In terms of assembly, the RNAP catalytic core consists of 2 alpha, 1 beta, 1 beta' and 1 omega subunit. When a sigma factor is associated with the core the holoenzyme is formed, which can initiate transcription.

The enzyme catalyses RNA(n) + a ribonucleoside 5'-triphosphate = RNA(n+1) + diphosphate. DNA-dependent RNA polymerase catalyzes the transcription of DNA into RNA using the four ribonucleoside triphosphates as substrates. This chain is DNA-directed RNA polymerase subunit beta, found in Geobacter sp. (strain M21).